Here is a 365-residue protein sequence, read N- to C-terminus: Caffeic acid 3-O-methyltransferase (365 aa).

130 to 136 (MNQDKVL) serves as a coordination point for substrate. The segment at 162 to 180 (AFEYHGTDPRFNKVFNRGM) is substrate binding. S-adenosyl-L-methionine-binding residues include G208, D231, D251, M252, and K265. H269 serves as the catalytic Proton acceptor.

Belongs to the class I-like SAM-binding methyltransferase superfamily. Cation-independent O-methyltransferase family. COMT subfamily. In terms of assembly, homodimer.

It carries out the reaction (E)-caffeate + S-adenosyl-L-methionine = (E)-ferulate + S-adenosyl-L-homocysteine + H(+). The protein operates within aromatic compound metabolism; phenylpropanoid biosynthesis. Its function is as follows. Catalyzes the conversion of caffeic acid to ferulic acid and of 5-hydroxyferulic acid to sinapic acid. The resulting products may subsequently be converted to the corresponding alcohols that are incorporated into lignins. The chain is Caffeic acid 3-O-methyltransferase (COMT1) from Prunus dulcis (Almond).